Consider the following 443-residue polypeptide: GTPase Der (443 aa).

2 EngA-type G domains span residues 3 to 167 (PVIA…PEEK) and 176 to 349 (IKIA…QSIQ). Residues 9-16 (GRPNVGKS), 56-60 (DTGGL), 119-122 (NKAD), 182-189 (GRPNVGKS), 229-233 (DTAGI), and 294-297 (NKWD) each bind GTP. A KH-like domain is found at 350 to 434 (QELTTGQLTR…PVHIKLKTDP (85 aa)).

It belongs to the TRAFAC class TrmE-Era-EngA-EngB-Septin-like GTPase superfamily. EngA (Der) GTPase family. Associates with the 50S ribosomal subunit.

Functionally, GTPase that plays an essential role in the late steps of ribosome biogenesis. In Coxiella burnetii (strain CbuG_Q212) (Coxiella burnetii (strain Q212)), this protein is GTPase Der.